Reading from the N-terminus, the 91-residue chain is Acylphosphatase (91 aa).

The Acylphosphatase-like domain maps to 3–89 (TLLVRISGKV…PDQPGFSQKP (87 aa)). Catalysis depends on residues arginine 18 and asparagine 36.

It belongs to the acylphosphatase family.

The enzyme catalyses an acyl phosphate + H2O = a carboxylate + phosphate + H(+). This is Acylphosphatase (acyP) from Rhodospirillum rubrum (strain ATCC 11170 / ATH 1.1.1 / DSM 467 / LMG 4362 / NCIMB 8255 / S1).